We begin with the raw amino-acid sequence, 569 residues long: MDEEARAAGCSPAPPRAPAASCGAAAELCLCSPTGVEGIEQVPGCPCFEDAGAVVVSGEAPEGPGVLCSGDGAELKLAEQGALDVRLGSPAVGIHEQQLLHRGTSGSDEAGAINEISPVEVSPSEASSNLDTAGAIGGSPLMLESLPETSDTRGCEQEVMPGVVVGSSNRDASSEVGVESECGSDADGRNGLGEGELVSSVDGGGAEKSSKVTGVLSEEGVDGMETALEPCVASVGSITQVEEGVDRMETSLDDSEASDGSTTQDFDTDVETESSGSSIEEQDMGYGVHIPHTEQAICEVARGNKSSEVKSSDRMSSVTLPTLILASGAAMLPHPSKVLTGGEDAYFIACDGWFGVADGVGQWSFEGINAGLYARELMDGCKKAVMESQGAPEMRTEEVLAKAADEARSPGSSTVLVAHFDGQVLHACNIGDSGFLVIRNGEIYQKSKPMTYGFNFPLQIEKGDDPFKLVQKYTIDLQEGDAIVTATDGLFDNVYEEEIAAVISKSLEAGLKPSEIAEFLVARAKEVGRSATCRSPFSDAALAVGYLGYSGGKLDDVTVVVSVVRKSEV.

Disordered stretches follow at residues 166-212 (GSSN…SSKV) and 251-279 (SLDD…GSSI). Over residues 174 to 183 (SEVGVESECG) the composition is skewed to low complexity. Residues 329–564 (AAMLPHPSKV…DDVTVVVSVV (236 aa)) enclose the PPM-type phosphatase domain. 4 residues coordinate Mn(2+): Asp-358, Gly-359, Asp-488, and Asp-555.

This sequence belongs to the PP2C family. Mg(2+) is required as a cofactor. Mn(2+) serves as cofactor.

It catalyses the reaction O-phospho-L-seryl-[protein] + H2O = L-seryl-[protein] + phosphate. It carries out the reaction O-phospho-L-threonyl-[protein] + H2O = L-threonyl-[protein] + phosphate. Functionally, may play a role in responses to biotic and abiotic stresses. The sequence is that of Probable protein phosphatase 2C BIPP2C1 (BIPP2C1) from Oryza sativa subsp. indica (Rice).